Consider the following 158-residue polypeptide: uncharacterized protein (158 aa).

This is an uncharacterized protein from Aedes vexans (Inland floodwater mosquito).